Reading from the N-terminus, the 373-residue chain is uncharacterized protein (373 aa).

This is an uncharacterized protein from Thermoproteus tenax.